Reading from the N-terminus, the 339-residue chain is Phenylalanine--tRNA ligase alpha subunit (339 aa).

Glu-247 serves as a coordination point for Mg(2+).

This sequence belongs to the class-II aminoacyl-tRNA synthetase family. Phe-tRNA synthetase alpha subunit type 1 subfamily. In terms of assembly, tetramer of two alpha and two beta subunits. It depends on Mg(2+) as a cofactor.

The protein localises to the cytoplasm. It catalyses the reaction tRNA(Phe) + L-phenylalanine + ATP = L-phenylalanyl-tRNA(Phe) + AMP + diphosphate + H(+). The chain is Phenylalanine--tRNA ligase alpha subunit from Deinococcus geothermalis (strain DSM 11300 / CIP 105573 / AG-3a).